A 1255-amino-acid chain; its full sequence is Cilia- and flagella-associated protein 337 B (1255 aa).

One can recognise an EF-hand domain in the interval Lys-87–Val-122. Ca(2+)-binding residues include Asp-100, Asn-102, Asn-104, and Glu-111. WD repeat units lie at residues Asp-228 to Ala-269, Glu-282 to Glu-322, Ala-326 to Val-365, Glu-368 to Lys-407, Gly-410 to Cys-449, Val-496 to Ser-536, Val-538 to Ala-577, Lys-580 to Glu-624, Leu-625 to Ser-664, Thr-669 to Gln-708, Gln-769 to Glu-808, and Ala-844 to Gln-883. Disordered regions lie at residues Ile-941–Pro-988 and Gln-1140–Gly-1160. The span at Thr-953 to Gln-969 shows a compositional bias: low complexity. Polar residues predominate over residues Thr-1148–Gly-1160.

It belongs to the CFAP337 family. As to quaternary structure, associates with components of the nexin-dynein regulatory complex (N-DRC) and the CFAP184:CFAP263 complex.

The protein localises to the cell projection. It is found in the cilium. In terms of biological role, associates with components of the nexin-dynein regulatory complex (N-DRC), a key regulator of ciliary/flagellar motility, and might act as an inner dynein arm (IDA) hub or linkage. The sequence is that of Cilia- and flagella-associated protein 337 B from Tetrahymena thermophila (strain SB210).